Consider the following 228-residue polypeptide: HTH-type transcriptional regulator ArcR (228 aa).

22–141 (SYINIPVGVL…VKLFSLLSET (120 aa)) lines the a nucleoside 3',5'-cyclic phosphate pocket. An HTH crp-type domain is found at 155-228 (KLAKERVTKI…SKNWLVSKDL (74 aa)). The H-T-H motif DNA-binding region spans 188–207 (IQLLSDMAGISRETTSHIIN).

The protein localises to the cytoplasm. Positively regulates the expression of the arcABDCR operon under anaerobic conditions, thus playing an essential role in arginine catabolism. May also control the expression of genes encoding proteins which are involved in anaerobic metabolism. Can bind cyclic AMP. This chain is HTH-type transcriptional regulator ArcR (arcR), found in Staphylococcus epidermidis (strain ATCC 35984 / DSM 28319 / BCRC 17069 / CCUG 31568 / BM 3577 / RP62A).